The primary structure comprises 146 residues: Heat-stable 19 kDa antigen (146 aa).

An N-terminal signal peptide occupies residues 1–20 (MKFSLLSAIAAAVFVPFTSA).

The protein belongs to the cerato-platanin family. In terms of processing, glycosylated.

The protein resides in the secreted. The sequence is that of Heat-stable 19 kDa antigen (CSA) from Coccidioides posadasii (strain C735) (Valley fever fungus).